The chain runs to 637 residues: DNA mismatch repair protein MutL (637 aa).

Disordered stretches follow at residues 352–384 (DDFT…NVLF) and 405–430 (ASVE…AMEQ).

This sequence belongs to the DNA mismatch repair MutL/HexB family.

This protein is involved in the repair of mismatches in DNA. It is required for dam-dependent methyl-directed DNA mismatch repair. May act as a 'molecular matchmaker', a protein that promotes the formation of a stable complex between two or more DNA-binding proteins in an ATP-dependent manner without itself being part of a final effector complex. In Halalkalibacterium halodurans (strain ATCC BAA-125 / DSM 18197 / FERM 7344 / JCM 9153 / C-125) (Bacillus halodurans), this protein is DNA mismatch repair protein MutL.